The chain runs to 341 residues: Serpentine receptor class beta-3 (341 aa).

The Extracellular segment spans residues 1 to 23 (MLETNDSVCELAYQLAYHPVYRS). N-linked (GlcNAc...) asparagine glycosylation is present at Asn5. The chain crosses the membrane as a helical span at residues 24-44 (SQFWSMLVSSLSIPALIYFIT). Residues 45–58 (RKIFFLHFHGNLKC) lie on the Cytoplasmic side of the membrane. Residues 59-79 (LLIVYFICNLLFSMALCFAFF) form a helical membrane-spanning segment. Over 80-103 (YQFLIPFFVTSKCQLLINTTLFKW) the chain is Extracellular. N-linked (GlcNAc...) asparagine glycosylation occurs at Asn97. The chain crosses the membrane as a helical span at residues 104 to 124 (GQICSFLLLTSSMLLPIGFSI). Topologically, residues 125–141 (ERFVALGNAQKYESSRT) are cytoplasmic. A helical transmembrane segment spans residues 142–162 (FLGPVIIFIIIAVDFSIIFSV). Topologically, residues 163–187 (YKNEPFTEGFYSFILVPSTTASQIN) are extracellular. The chain crosses the membrane as a helical span at residues 188-208 (MYFFVLLFVKIFNLLLNCILL). The Cytoplasmic portion of the chain corresponds to 209–237 (RIHKKIRIKYYSLSVRYEMEEILQSSKFT). Residues 238 to 258 (FIIRFTHLLFFGFYVVVILFV) traverse the membrane as a helical segment. Residues 259-276 (RIMGESFFNGTLNYSVAR) lie on the Extracellular side of the membrane. N-linked (GlcNAc...) asparagine glycosylation is found at Asn267 and Asn271. A helical transmembrane segment spans residues 277 to 297 (GVFCTVPTYNLIIVIIGIKSL). Topologically, residues 298–341 (RHLNLQRLNKVQSTVQIKSTGKEGSKNYEDIITNYWDSVSSRTP) are cytoplasmic.

It belongs to the nematode receptor-like protein srb family. As to expression, expressed throughout the head.

Its subcellular location is the cell membrane. It is found in the perikaryon. The protein resides in the cell projection. The protein localises to the dendrite. In terms of biological role, G-protein coupled receptor. In Caenorhabditis elegans, this protein is Serpentine receptor class beta-3.